Here is a 368-residue protein sequence, read N- to C-terminus: S-adenosylmethionine decarboxylase proenzyme 1 (368 aa).

Active-site residues include E9 and R12. S69 (schiff-base intermediate with substrate; via pyruvic acid) is an active-site residue. S69 is subject to Pyruvic acid (Ser); by autocatalysis. The active-site Proton donor; for catalytic activity is C83. Active-site proton acceptor; for processing activity residues include S234 and H247.

Belongs to the eukaryotic AdoMetDC family. Requires pyruvate as cofactor. Is synthesized initially as an inactive proenzyme. Formation of the active enzyme involves a self-maturation process in which the active site pyruvoyl group is generated from an internal serine residue via an autocatalytic post-translational modification. Two non-identical subunits are generated from the proenzyme in this reaction, and the pyruvate is formed at the N-terminus of the alpha chain, which is derived from the carboxyl end of the proenzyme. The post-translation cleavage follows an unusual pathway, termed non-hydrolytic serinolysis, in which the side chain hydroxyl group of the serine supplies its oxygen atom to form the C-terminus of the beta chain, while the remainder of the serine residue undergoes an oxidative deamination to produce ammonia and the pyruvoyl group blocking the N-terminus of the alpha chain.

It catalyses the reaction S-adenosyl-L-methionine + H(+) = S-adenosyl 3-(methylsulfanyl)propylamine + CO2. It functions in the pathway amine and polyamine biosynthesis; S-adenosylmethioninamine biosynthesis; S-adenosylmethioninamine from S-adenosyl-L-methionine: step 1/1. The polypeptide is S-adenosylmethionine decarboxylase proenzyme 1 (SAMDC1) (Brassica juncea (Indian mustard)).